Here is a 177-residue protein sequence, read N- to C-terminus: Large ribosomal subunit protein uL6 (177 aa).

This sequence belongs to the universal ribosomal protein uL6 family. Part of the 50S ribosomal subunit.

Functionally, this protein binds to the 23S rRNA, and is important in its secondary structure. It is located near the subunit interface in the base of the L7/L12 stalk, and near the tRNA binding site of the peptidyltransferase center. The sequence is that of Large ribosomal subunit protein uL6 from Natronomonas pharaonis (strain ATCC 35678 / DSM 2160 / CIP 103997 / JCM 8858 / NBRC 14720 / NCIMB 2260 / Gabara) (Halobacterium pharaonis).